Here is a 242-residue protein sequence, read N- to C-terminus: Pyridoxine 5'-phosphate synthase (242 aa).

Asparagine 6 contributes to the 3-amino-2-oxopropyl phosphate binding site. 1-deoxy-D-xylulose 5-phosphate is bound at residue 8-9; it reads DH. Residue arginine 17 participates in 3-amino-2-oxopropyl phosphate binding. Histidine 42 (proton acceptor) is an active-site residue. Arginine 44 and histidine 49 together coordinate 1-deoxy-D-xylulose 5-phosphate. The active-site Proton acceptor is glutamate 69. 1-deoxy-D-xylulose 5-phosphate is bound at residue threonine 99. Histidine 190 acts as the Proton donor in catalysis. 3-amino-2-oxopropyl phosphate contacts are provided by residues glycine 191 and 212 to 213; that span reads GH.

This sequence belongs to the PNP synthase family. In terms of assembly, homooctamer; tetramer of dimers.

The protein localises to the cytoplasm. The catalysed reaction is 3-amino-2-oxopropyl phosphate + 1-deoxy-D-xylulose 5-phosphate = pyridoxine 5'-phosphate + phosphate + 2 H2O + H(+). Its pathway is cofactor biosynthesis; pyridoxine 5'-phosphate biosynthesis; pyridoxine 5'-phosphate from D-erythrose 4-phosphate: step 5/5. In terms of biological role, catalyzes the complicated ring closure reaction between the two acyclic compounds 1-deoxy-D-xylulose-5-phosphate (DXP) and 3-amino-2-oxopropyl phosphate (1-amino-acetone-3-phosphate or AAP) to form pyridoxine 5'-phosphate (PNP) and inorganic phosphate. In Neisseria meningitidis serogroup B (strain ATCC BAA-335 / MC58), this protein is Pyridoxine 5'-phosphate synthase.